A 388-amino-acid polypeptide reads, in one-letter code: Flap endonuclease 1 (388 aa).

An N-domain region spans residues 1–104 (MGILGLSKLI…GELAKRAERR (104 aa)). Asp-34 is a Mg(2+) binding site. DNA is bound by residues Arg-47 and Arg-70. Mg(2+)-binding residues include Asp-86, Glu-158, Glu-160, Asp-179, and Asp-181. The interval 122 to 253 (EIEKFNRRLV…KRAIELINSY (132 aa)) is I-domain. Glu-158 provides a ligand contact to DNA. DNA-binding residues include Gly-231 and Asp-233. Asp-233 serves as a coordination point for Mg(2+). The segment at 336–344 (TQVRLDSFF) is interaction with PCNA. Residues 355-388 (AAAKRKAEEAKKSANNKKAKIGGGGGAGRGRRPK) are disordered.

Belongs to the XPG/RAD2 endonuclease family. FEN1 subfamily. In terms of assembly, interacts with PCNA. Three molecules of FEN1 bind to one PCNA trimer with each molecule binding to one PCNA monomer. PCNA stimulates the nuclease activity without altering cleavage specificity. Mg(2+) serves as cofactor. Post-translationally, phosphorylated. Phosphorylation upon DNA damage induces relocalization to the nuclear plasma.

The protein localises to the nucleus. It localises to the nucleolus. The protein resides in the nucleoplasm. It is found in the mitochondrion. Structure-specific nuclease with 5'-flap endonuclease and 5'-3' exonuclease activities involved in DNA replication and repair. During DNA replication, cleaves the 5'-overhanging flap structure that is generated by displacement synthesis when DNA polymerase encounters the 5'-end of a downstream Okazaki fragment. It enters the flap from the 5'-end and then tracks to cleave the flap base, leaving a nick for ligation. Also involved in the long patch base excision repair (LP-BER) pathway, by cleaving within the apurinic/apyrimidinic (AP) site-terminated flap. Acts as a genome stabilization factor that prevents flaps from equilibrating into structures that lead to duplications and deletions. Also possesses 5'-3' exonuclease activity on nicked or gapped double-stranded DNA, and exhibits RNase H activity. Also involved in replication and repair of rDNA and in repairing mitochondrial DNA. This Drosophila willistoni (Fruit fly) protein is Flap endonuclease 1.